The sequence spans 60 residues: Large ribosomal subunit protein bL32 (60 aa).

This sequence belongs to the bacterial ribosomal protein bL32 family.

This chain is Large ribosomal subunit protein bL32, found in Kosmotoga olearia (strain ATCC BAA-1733 / DSM 21960 / TBF 19.5.1).